The following is a 288-amino-acid chain: MKIIVPATSANIGPGFDSVGVALSKYLEIEVLEESQEWVIEHDLNPRIPKDRRNLLVKIALQLAPDIQPRRLKMTSDIPLARGLGSSSSVIVAGIELANQLAHLNLSDYQKLKIATKIEGHPDNVAPAIYGNLVVSSSSRNQVSAVVADFPDADFIAYIPDYELRTVESRQVLPNRLSYKEAVAASSIANVAIAALLKGDMKIAGRAIESDLFHEKYRQPLIKEFSDIKFLARKNGSYATYISGAGPTVMVLSPKHKTETIYQLLQKQNFKGQIFRLQVDTEGVRVEK.

Residue 79–89 coordinates ATP; that stretch reads PLARGLGSSSS.

Belongs to the GHMP kinase family. Homoserine kinase subfamily.

Its subcellular location is the cytoplasm. The catalysed reaction is L-homoserine + ATP = O-phospho-L-homoserine + ADP + H(+). It functions in the pathway amino-acid biosynthesis; L-threonine biosynthesis; L-threonine from L-aspartate: step 4/5. Its function is as follows. Catalyzes the ATP-dependent phosphorylation of L-homoserine to L-homoserine phosphate. The protein is Homoserine kinase of Streptococcus sanguinis (strain SK36).